Here is a 114-residue protein sequence, read N- to C-terminus: UPF0342 protein LSEI_1724 (114 aa).

The protein belongs to the UPF0342 family.

The polypeptide is UPF0342 protein LSEI_1724 (Lacticaseibacillus paracasei (strain ATCC 334 / BCRC 17002 / CCUG 31169 / CIP 107868 / KCTC 3260 / NRRL B-441) (Lactobacillus paracasei)).